A 215-amino-acid polypeptide reads, in one-letter code: Adenylate kinase (215 aa).

Position 10–15 (10–15 (GAGKGT)) interacts with ATP. The tract at residues 30–59 (STGDMLRAAIKAGTPLGLEAKKIIDEGGLV) is NMP. AMP-binding positions include T31, R36, 57–59 (GLV), 85–88 (GFPR), and Q92. Residues 122–159 (GRRVHLASGRTYHVTYNPPKVEGKDDVTGEDLIQRDDD) are LID. ATP contacts are provided by residues R123 and 132-133 (TY). AMP-binding residues include R156 and R167. Q200 is a binding site for ATP.

The protein belongs to the adenylate kinase family. In terms of assembly, monomer.

The protein localises to the cytoplasm. It carries out the reaction AMP + ATP = 2 ADP. Its pathway is purine metabolism; AMP biosynthesis via salvage pathway; AMP from ADP: step 1/1. Its function is as follows. Catalyzes the reversible transfer of the terminal phosphate group between ATP and AMP. Plays an important role in cellular energy homeostasis and in adenine nucleotide metabolism. The protein is Adenylate kinase of Neisseria meningitidis serogroup B (strain ATCC BAA-335 / MC58).